We begin with the raw amino-acid sequence, 133 residues long: Complexin-1 (133 aa).

2 disordered regions span residues 1-40 (MDFVMKQALGGATKDMGKMLGGDEEKDPDAEKKEEERLEA) and 85-112 (AMEAQAEGSLTRPKKAIPAGCGDEDEEE). The segment covering 15–40 (DMGKMLGGDEEKDPDAEKKEEERLEA) has biased composition (basic and acidic residues). Residues 28-60 (PDAEKKEEERLEALRQAEEERAGKYAKMEAERE) are a coiled coil.

The protein belongs to the complexin/synaphin family. As to quaternary structure, binds to the SNARE core complex containing SNAP25, VAMP2 and syntaxin-1. Nervous system. Present in electric organ (at protein level).

It is found in the cytoplasm. The protein localises to the cytosol. Its function is as follows. Positively regulates a late step in synaptic vesicle exocytosis. This Narke japonica (Japanese sleeper ray) protein is Complexin-1.